A 483-amino-acid chain; its full sequence is Regulatory protein ViaA (483 aa).

It belongs to the ViaA family. In terms of assembly, homodimer. Interacts with RavA.

The protein localises to the cytoplasm. In terms of biological role, component of the RavA-ViaA chaperone complex, which may act on the membrane to optimize the function of some of the respiratory chains. ViaA stimulates the ATPase activity of RavA. In Shigella sonnei (strain Ss046), this protein is Regulatory protein ViaA.